A 580-amino-acid polypeptide reads, in one-letter code: Glypican-3 (580 aa).

A signal peptide spans Met-1–Ala-24. Gln-25 carries the pyrrolidone carboxylic acid modification. 7 cysteine pairs are disulfide-bonded: Cys-35/Cys-72, Cys-65/Cys-262, Cys-73/Cys-265, Cys-197/Cys-349, Cys-252/Cys-285, Cys-274/Cys-422, and Cys-278/Cys-410. Residues Asn-124 and Asn-241 are each glycosylated (N-linked (GlcNAc...) asparagine). Ser-352 is subject to Phosphoserine. Asn-418 is a glycosylation site (N-linked (GlcNAc...) asparagine). O-linked (Xyl...) (glycosaminoglycan) serine glycosylation is found at Ser-495 and Ser-509. The GPI-anchor amidated asparagine moiety is linked to residue Asn-554. The propeptide at Leu-555–His-580 is removed in mature form.

The protein belongs to the glypican family. Heterodimer; disulfide-linked. Cleavage by a furin-like convertase results in production of alpha and beta chains which form a disulfide-linked heterodimer. Interacts with DPP4. Interacts with FGF2. Interacts with WNT5A. Also interacts with WNT3A and WNT7B. Interacts with hedgehog protein SHH; the heparan sulfate chains are not required for the interaction. Also interacts with hedgehog protein IHH. Interacts with CD81. Interacts with Wnt receptors FZD4, FZD7 and FZD8; the heparan sulfate chains are required for the interaction. Post-translationally, O-glycosylated; contains heparan sulfate and/or chondroitin sulfate. Cleaved intracellularly by a furin-like convertase to generate 2 subunits, alpha and beta, which remain associated through disulfide bonds and are associated with the cell surface via the GPI-anchor. This processing is essential for its role in inhibition of hedgehog signaling. A second proteolytic event may result in cleavage of the protein on the cell surface, separating it from the GPI-anchor and leading to its shedding from the cell surface.

The protein localises to the cell membrane. Cell surface proteoglycan. Negatively regulates the hedgehog signaling pathway when attached via the GPI-anchor to the cell surface by competing with the hedgehog receptor PTC1 for binding to hedgehog proteins. Binding to the hedgehog protein SHH triggers internalization of the complex by endocytosis and its subsequent lysosomal degradation. Positively regulates the canonical Wnt signaling pathway by binding to the Wnt receptor Frizzled and stimulating the binding of the Frizzled receptor to Wnt ligands. Positively regulates the non-canonical Wnt signaling pathway. Binds to CD81 which decreases the availability of free CD81 for binding to the transcriptional repressor HHEX, resulting in nuclear translocation of HHEX and transcriptional repression. Inhibits the dipeptidyl peptidase activity of DPP4. Plays a role in limb patterning and skeletal development by controlling the cellular response to BMP4. Modulates the effects of growth factors BMP2, BMP7 and FGF7 on renal branching morphogenesis. Required for coronary vascular development. Plays a role in regulating cell movements during gastrulation. The polypeptide is Glypican-3 (GPC3) (Pan troglodytes (Chimpanzee)).